Here is a 235-residue protein sequence, read N- to C-terminus: Small ribosomal subunit protein eS4 (235 aa).

One can recognise an S4 RNA-binding domain in the interval 37 to 100; that stretch reads LPLGIIIRDI…NETYRMFQDE (64 aa).

This sequence belongs to the eukaryotic ribosomal protein eS4 family.

The polypeptide is Small ribosomal subunit protein eS4 (Methanosarcina barkeri (strain Fusaro / DSM 804)).